The sequence spans 382 residues: Succinyl-diaminopimelate desuccinylase (382 aa).

Histidine 73 serves as a coordination point for Zn(2+). Residue aspartate 75 is part of the active site. Aspartate 106 serves as a coordination point for Zn(2+). Glutamate 140 serves as the catalytic Proton acceptor. 3 residues coordinate Zn(2+): glutamate 141, glutamate 169, and histidine 355.

This sequence belongs to the peptidase M20A family. DapE subfamily. As to quaternary structure, homodimer. It depends on Zn(2+) as a cofactor. The cofactor is Co(2+).

It catalyses the reaction N-succinyl-(2S,6S)-2,6-diaminopimelate + H2O = (2S,6S)-2,6-diaminopimelate + succinate. Its pathway is amino-acid biosynthesis; L-lysine biosynthesis via DAP pathway; LL-2,6-diaminopimelate from (S)-tetrahydrodipicolinate (succinylase route): step 3/3. Catalyzes the hydrolysis of N-succinyl-L,L-diaminopimelic acid (SDAP), forming succinate and LL-2,6-diaminopimelate (DAP), an intermediate involved in the bacterial biosynthesis of lysine and meso-diaminopimelic acid, an essential component of bacterial cell walls. The chain is Succinyl-diaminopimelate desuccinylase from Saccharophagus degradans (strain 2-40 / ATCC 43961 / DSM 17024).